Reading from the N-terminus, the 78-residue chain is Defensin-like protein 308 (78 aa).

Positions 1 to 19 (MKTSAFFIAVLLILSCSSS) are cleaved as a signal peptide. 3 disulfides stabilise this stretch: Cys31-Cys50, Cys37-Cys55, and Cys41-Cys57.

Belongs to the DEFL family.

The protein resides in the secreted. The protein is Defensin-like protein 308 of Arabidopsis thaliana (Mouse-ear cress).